A 668-amino-acid chain; its full sequence is DNA ligase (668 aa).

NAD(+) is bound by residues 34-38, 83-84, and Glu117; these read DAEYD and SL. Lys119 serves as the catalytic N6-AMP-lysine intermediate. 4 residues coordinate NAD(+): Arg140, Glu177, Lys293, and Lys317. Residues Cys411, Cys414, Cys429, and Cys434 each contribute to the Zn(2+) site. The BRCT domain maps to 591-668; that stretch reads RVGGRFTGKT…SEDDFLELMQ (78 aa).

This sequence belongs to the NAD-dependent DNA ligase family. LigA subfamily. Mg(2+) serves as cofactor. The cofactor is Mn(2+).

The catalysed reaction is NAD(+) + (deoxyribonucleotide)n-3'-hydroxyl + 5'-phospho-(deoxyribonucleotide)m = (deoxyribonucleotide)n+m + AMP + beta-nicotinamide D-nucleotide.. DNA ligase that catalyzes the formation of phosphodiester linkages between 5'-phosphoryl and 3'-hydroxyl groups in double-stranded DNA using NAD as a coenzyme and as the energy source for the reaction. It is essential for DNA replication and repair of damaged DNA. The chain is DNA ligase from Citrifermentans bemidjiense (strain ATCC BAA-1014 / DSM 16622 / JCM 12645 / Bem) (Geobacter bemidjiensis).